The primary structure comprises 375 residues: Chaperone protein DnaJ (375 aa).

A J domain is found at 5–70; sequence DYYEVLGVSR…EKRARYDRFG (66 aa). The CR-type zinc finger occupies 136–214; the sequence is GDEVTLRIPK…CRGAGQVQDI (79 aa). Residues cysteine 149, cysteine 152, cysteine 166, cysteine 169, cysteine 188, cysteine 191, cysteine 202, and cysteine 205 each contribute to the Zn(2+) site. CXXCXGXG motif repeat units follow at residues 149-156, 166-173, 188-195, and 202-209; these read CPDCSGSG, CPQCGGSG, CSACRGEG, and CPRCRGAG.

This sequence belongs to the DnaJ family. As to quaternary structure, homodimer. Zn(2+) is required as a cofactor.

The protein resides in the cytoplasm. Functionally, participates actively in the response to hyperosmotic and heat shock by preventing the aggregation of stress-denatured proteins and by disaggregating proteins, also in an autonomous, DnaK-independent fashion. Unfolded proteins bind initially to DnaJ; upon interaction with the DnaJ-bound protein, DnaK hydrolyzes its bound ATP, resulting in the formation of a stable complex. GrpE releases ADP from DnaK; ATP binding to DnaK triggers the release of the substrate protein, thus completing the reaction cycle. Several rounds of ATP-dependent interactions between DnaJ, DnaK and GrpE are required for fully efficient folding. Also involved, together with DnaK and GrpE, in the DNA replication of plasmids through activation of initiation proteins. The polypeptide is Chaperone protein DnaJ (Oleidesulfovibrio alaskensis (strain ATCC BAA-1058 / DSM 17464 / G20) (Desulfovibrio alaskensis)).